The chain runs to 537 residues: Tegument protein BRRF2 (537 aa).

Disordered stretches follow at residues 321 to 366 (RPRF…AVPP), 378 to 398 (AKQNRGGMGSLHLAKPEETSP), 414 to 466 (SKQH…DEEF), and 486 to 537 (GLRV…LSVV). A compositionally biased stretch (polar residues) spans 334–347 (EPQQTCSQLTSRGN). Low complexity predominate over residues 423–441 (SSQAAPSFSSVAPVASLSG). The span at 492 to 517 (DEDEDGSEDGEFSDLDLSDSDHEGDE) shows a compositional bias: acidic residues.

The protein belongs to the lymphocryptovirus BRRF2 family.

It localises to the virion tegument. This chain is Tegument protein BRRF2, found in Homo sapiens (Human).